The chain runs to 477 residues: Phosphatidylinositol 4-kinase type 2-beta (477 aa).

Residues M1–S80 are disordered. At S45 the chain carries Phosphoserine. Residues G116–C447 enclose the PI3K/PI4K catalytic domain. Positions I122 to G128 are G-loop. Residues S129 and K144 each contribute to the ATP site. The tract at residues E149 to Y151 is important for substrate binding. Residues K157–C170 form an important for interaction with membranes region. ATP is bound by residues Q253–V256 and R267–R268. The segment at K260–R268 is important for interaction with membranes. Residues R297–N305 are catalytic loop. Residues A338 to F358 are activation loop. D340 contacts ATP. An important for interaction with membranes region spans residues W353 to W362.

The protein belongs to the PI3/PI4-kinase family. Type II PI4K subfamily.

Its subcellular location is the cytoplasm. It localises to the cytosol. The protein localises to the golgi apparatus membrane. The protein resides in the endoplasmic reticulum membrane. It is found in the cell membrane. Its subcellular location is the early endosome membrane. The catalysed reaction is a 1,2-diacyl-sn-glycero-3-phospho-(1D-myo-inositol) + ATP = a 1,2-diacyl-sn-glycero-3-phospho-(1D-myo-inositol 4-phosphate) + ADP + H(+). In terms of biological role, together with PI4K2A and the type III PI4Ks (PIK4CA and PIK4CB) it contributes to the overall PI4-kinase activity of the cell. This contribution may be especially significant in plasma membrane, endosomal and Golgi compartments. The phosphorylation of phosphatidylinositol (PI) to PI4P is the first committed step in the generation of phosphatidylinositol 4,5-bisphosphate (PIP2), a precursor of the second messenger inositol 1,4,5-trisphosphate (InsP3). Contributes to the production of InsP3 in stimulated cells and is likely to be involved in the regulation of vesicular trafficking. The protein is Phosphatidylinositol 4-kinase type 2-beta (Pi4k2b) of Rattus norvegicus (Rat).